We begin with the raw amino-acid sequence, 154 residues long: Ribonuclease H (154 aa).

The RNase H type-1 domain maps to 3–144; the sequence is ELPVVTIYTD…ADQLARDGIV (142 aa). Mg(2+) is bound by residues Asp-12, Glu-50, Asp-72, and Asp-136.

This sequence belongs to the RNase H family. As to quaternary structure, monomer. It depends on Mg(2+) as a cofactor.

The protein resides in the cytoplasm. It carries out the reaction Endonucleolytic cleavage to 5'-phosphomonoester.. Its function is as follows. Endonuclease that specifically degrades the RNA of RNA-DNA hybrids. This chain is Ribonuclease H, found in Bradyrhizobium diazoefficiens (strain JCM 10833 / BCRC 13528 / IAM 13628 / NBRC 14792 / USDA 110).